Here is a 609-residue protein sequence, read N- to C-terminus: UvrABC system protein C (609 aa).

The 79-residue stretch at 13–91 (HQPGVYRMFD…IKAFQPRYNV (79 aa)) folds into the GIY-YIG domain. Residues 201–236 (QQVLEHLIKKMEQASMQLNFEQAAYFRDQIQAIRAV) form the UVR domain.

The protein belongs to the UvrC family. In terms of assembly, interacts with UvrB in an incision complex.

The protein resides in the cytoplasm. Functionally, the UvrABC repair system catalyzes the recognition and processing of DNA lesions. UvrC both incises the 5' and 3' sides of the lesion. The N-terminal half is responsible for the 3' incision and the C-terminal half is responsible for the 5' incision. This chain is UvrABC system protein C, found in Histophilus somni (strain 2336) (Haemophilus somnus).